The sequence spans 191 residues: Mating-type-like protein ALPHA1 (191 aa).

A DNA-binding region (alpha box) is located at residues 118-174; sequence SKKRPMNAFMAFRTYYAQLGTGLKQNTLSVILSEAWNAPETDQNIWDIFAQQFNFAS.

Belongs to the MATALPHA1 family.

Its subcellular location is the nucleus. In terms of biological role, mating type proteins are sequence specific DNA-binding proteins that act as master switches in yeast differentiation by controlling gene expression in a cell type-specific fashion. Transcriptional activator that induces the transcription of alpha-specific genes. This Candida glabrata (strain ATCC 2001 / BCRC 20586 / JCM 3761 / NBRC 0622 / NRRL Y-65 / CBS 138) (Yeast) protein is Mating-type-like protein ALPHA1 (MTL1ALPHA1).